We begin with the raw amino-acid sequence, 323 residues long: Dolichyl-phosphate beta-glucosyltransferase ALG5A (323 aa).

The Lumenal segment spans residues 1–5; that stretch reads MKFWR. A helical transmembrane segment spans residues 6–26; the sequence is FVQILFFLGVAAVGLVVAVMI. Over 27-323 the chain is Cytoplasmic; that stretch reads ANADDTTLFD…GAWKIRDRRH (297 aa).

It belongs to the glycosyltransferase 2 family.

The protein localises to the endoplasmic reticulum membrane. The enzyme catalyses a di-trans,poly-cis-dolichyl phosphate + UDP-alpha-D-glucose = a di-trans,poly-cis-dolichyl beta-D-glucosyl phosphate + UDP. It functions in the pathway protein modification; protein glycosylation. Dolichyl-phosphate beta-glucosyltransferase involved in the glycosylation of glycoproteins through the synthesis of dolichyl beta-D-glucosyl phosphate which serves as a sugar donor for transfer of three glucose residues to the Man-9-GlcNAc-2-PP-dolichol precursor to N-glycans. The polypeptide is Dolichyl-phosphate beta-glucosyltransferase ALG5A (Trichomonas vaginalis (strain ATCC PRA-98 / G3)).